A 191-amino-acid chain; its full sequence is Probable DNA-directed RNA polymerase subunit delta (191 aa).

Residues 14-83 (LSMIEVARAI…GENKWGLRSW (70 aa)) form the HTH HARE-type domain. Positions 119-191 (EDAIDYRDDD…EDEEDEEPVL (73 aa)) are disordered.

In terms of assembly, RNAP is composed of a core of 2 alpha, a beta and a beta' subunits. The core is associated with a delta subunit and one of several sigma factors.

Participates in both the initiation and recycling phases of transcription. In the presence of the delta subunit, RNAP displays an increased specificity of transcription, a decreased affinity for nucleic acids, and an increased efficiency of RNA synthesis because of enhanced recycling. The chain is Probable DNA-directed RNA polymerase subunit delta from Streptococcus pyogenes serotype M6 (strain ATCC BAA-946 / MGAS10394).